A 333-amino-acid polypeptide reads, in one-letter code: Lipoyl synthase (333 aa).

Residues 1 to 29 are disordered; that stretch reads MTDSASGASAVANIATPSNEPYDATRKQK. Positions 80, 85, 91, 106, 110, 113, and 320 each coordinate [4Fe-4S] cluster. In terms of domain architecture, Radical SAM core spans 91–309; sequence CFGKGTATFM…EEKAYEMGFT (219 aa).

The protein belongs to the radical SAM superfamily. Lipoyl synthase family. Requires [4Fe-4S] cluster as cofactor.

The protein resides in the cytoplasm. It carries out the reaction [[Fe-S] cluster scaffold protein carrying a second [4Fe-4S](2+) cluster] + N(6)-octanoyl-L-lysyl-[protein] + 2 oxidized [2Fe-2S]-[ferredoxin] + 2 S-adenosyl-L-methionine + 4 H(+) = [[Fe-S] cluster scaffold protein] + N(6)-[(R)-dihydrolipoyl]-L-lysyl-[protein] + 4 Fe(3+) + 2 hydrogen sulfide + 2 5'-deoxyadenosine + 2 L-methionine + 2 reduced [2Fe-2S]-[ferredoxin]. Its pathway is protein modification; protein lipoylation via endogenous pathway; protein N(6)-(lipoyl)lysine from octanoyl-[acyl-carrier-protein]: step 2/2. Catalyzes the radical-mediated insertion of two sulfur atoms into the C-6 and C-8 positions of the octanoyl moiety bound to the lipoyl domains of lipoate-dependent enzymes, thereby converting the octanoylated domains into lipoylated derivatives. The sequence is that of Lipoyl synthase from Ralstonia nicotianae (strain ATCC BAA-1114 / GMI1000) (Ralstonia solanacearum).